The following is a 209-amino-acid chain: Octanoyltransferase (209 aa).

In terms of domain architecture, BPL/LPL catalytic spans 30-209; that stretch reads DNEPEIVYLV…IQTEFNKIFK (180 aa). Substrate-binding positions include 69–76, 143–145, and 156–158; these read RGGKFTFH, AIG, and GVA. The active-site Acyl-thioester intermediate is the Cys174.

Belongs to the LipB family.

The protein resides in the cytoplasm. It carries out the reaction octanoyl-[ACP] + L-lysyl-[protein] = N(6)-octanoyl-L-lysyl-[protein] + holo-[ACP] + H(+). It functions in the pathway protein modification; protein lipoylation via endogenous pathway; protein N(6)-(lipoyl)lysine from octanoyl-[acyl-carrier-protein]: step 1/2. Its function is as follows. Catalyzes the transfer of endogenously produced octanoic acid from octanoyl-acyl-carrier-protein onto the lipoyl domains of lipoate-dependent enzymes. Lipoyl-ACP can also act as a substrate although octanoyl-ACP is likely to be the physiological substrate. This chain is Octanoyltransferase, found in Rickettsia felis (strain ATCC VR-1525 / URRWXCal2) (Rickettsia azadi).